The following is a 271-amino-acid chain: Ribosomal RNA small subunit methyltransferase A (271 aa).

His-11, Leu-13, Gly-38, Glu-59, Asp-84, and Asn-109 together coordinate S-adenosyl-L-methionine.

It belongs to the class I-like SAM-binding methyltransferase superfamily. rRNA adenine N(6)-methyltransferase family. RsmA subfamily.

The protein localises to the cytoplasm. It carries out the reaction adenosine(1518)/adenosine(1519) in 16S rRNA + 4 S-adenosyl-L-methionine = N(6)-dimethyladenosine(1518)/N(6)-dimethyladenosine(1519) in 16S rRNA + 4 S-adenosyl-L-homocysteine + 4 H(+). Specifically dimethylates two adjacent adenosines (A1518 and A1519) in the loop of a conserved hairpin near the 3'-end of 16S rRNA in the 30S particle. May play a critical role in biogenesis of 30S subunits. This Trichormus variabilis (strain ATCC 29413 / PCC 7937) (Anabaena variabilis) protein is Ribosomal RNA small subunit methyltransferase A.